The following is a 557-amino-acid chain: MATEKNTLLSLILTAGITALVATGQKAEQPEVVTNYGSVRGYQVKVNAAERSVNVFLGLPFAKPPVGPLRFSEPQPPEPWKGVRDAASYPPMCLQDKVLGQYLSDAITNRKEKVRLQISEDCLYLNVYTPVSTEEQEKLPVFVWIHGGGLVSGAASSYDGSALAAFDNVVVVTIQYRLGIAGYFSTGDKHARGNWGYLDQVAALQWIQENIIHFRGDPGSVTIFGESAGGVSVSALVLSPLAKGLFHKAISESGTAVRILFTEQPEEQAQRIAAAAGCEKSSSAALVECLREKTEAEMEQITLKMPPMFISASLDGVFFPKSPRQLLSEKVINAVPYIIGVNNCEFGWILPRMMKFPEFTEGLEKDVARQVLQSTLALSFKGAPSDIVDLVYNEYIGVAENRAQVRDGLLDSIADPLFVFSAVEVARHHRDAGNPVYFYEFQHRPSSAAGVVPEFVKADHADEIAFVFGKPFLAGNATEEEAKLSRTVMKYWTNFARNGNPNGEGLVHWPQYDMDERYLEIDLTQKAAKKLKERKMEFWMQLTEQIMSDRRRKHTDL.

The N-terminal stretch at 1–25 (MATEKNTLLSLILTAGITALVATGQ) is a signal peptide. A disulfide bridge connects residues cysteine 93 and cysteine 122. Serine 227 serves as the catalytic Acyl-ester intermediate. Active-site charge relay system residues include glutamate 345 and histidine 460. N-linked (GlcNAc...) asparagine glycosylation is present at asparagine 476.

It belongs to the type-B carboxylesterase/lipase family. In terms of tissue distribution, highest levels in uropygial gland, much lower in liver and kidney.

Fatty acid biosynthesis chain termination and release of the free fatty acid product is achieved by hydrolysis of the thio ester by a thioesterase. This thioesterase may be associated with peroxisome proliferation and may play a role in the production of 3-hydroxy fatty acid diester pheromones. The protein is Fatty acyl-CoA hydrolase precursor, medium chain of Anas platyrhynchos (Mallard).